Reading from the N-terminus, the 26-residue chain is AMP deaminase 1 (26 aa).

Belongs to the metallo-dependent hydrolases superfamily. Adenosine and AMP deaminases family. Homotetramer. The cofactor is Zn(2+).

It carries out the reaction AMP + H2O + H(+) = IMP + NH4(+). It functions in the pathway purine metabolism; IMP biosynthesis via salvage pathway; IMP from AMP: step 1/1. AMP deaminase plays a critical role in energy metabolism. The polypeptide is AMP deaminase 1 (AMPD1) (Oryctolagus cuniculus (Rabbit)).